The chain runs to 129 residues: uncharacterized protein (129 aa).

Helical transmembrane passes span 35-55 and 98-118; these read IVDG…WKIP and ILLL…IILL.

It localises to the membrane. This is an uncharacterized protein from Saccharomyces cerevisiae (strain ATCC 204508 / S288c) (Baker's yeast).